The chain runs to 493 residues: Cytochrome P450 2E1 (493 aa).

298–303 (FAGTET) contributes to the substrate binding site. Cys-437 is a heme binding site.

The protein belongs to the cytochrome P450 family. Interacts with chaperones HSP70 and HSP90; this interaction is required for initial targeting to mitochondria. Heme is required as a cofactor.

The protein resides in the endoplasmic reticulum membrane. It localises to the microsome membrane. It is found in the mitochondrion inner membrane. The catalysed reaction is an organic molecule + reduced [NADPH--hemoprotein reductase] + O2 = an alcohol + oxidized [NADPH--hemoprotein reductase] + H2O + H(+). The enzyme catalyses (5Z,8Z,11Z)-eicosatrienoate + reduced [NADPH--hemoprotein reductase] + O2 = 19-hydroxy-(5Z,8Z,11Z)-eicosatrienoate + oxidized [NADPH--hemoprotein reductase] + H2O + H(+). It catalyses the reaction (5Z,8Z,11Z,14Z,17Z)-eicosapentaenoate + reduced [NADPH--hemoprotein reductase] + O2 = 19-hydroxy-(5Z,8Z,11Z,14Z,17Z)-eicosapentaenoate + oxidized [NADPH--hemoprotein reductase] + H2O + H(+). It carries out the reaction (4Z,7Z,10Z,13Z,16Z,19Z)-docosahexaenoate + reduced [NADPH--hemoprotein reductase] + O2 = 21-hydroxy-(4Z,7Z,10Z,13Z,16Z,19Z)-docosahexaenoate + oxidized [NADPH--hemoprotein reductase] + H2O + H(+). The catalysed reaction is dodecanoate + reduced [NADPH--hemoprotein reductase] + O2 = 11-hydroxydodecanoate + oxidized [NADPH--hemoprotein reductase] + H2O + H(+). The enzyme catalyses tetradecanoate + reduced [NADPH--hemoprotein reductase] + O2 = 13-hydroxytetradecanoate + oxidized [NADPH--hemoprotein reductase] + H2O + H(+). It catalyses the reaction 4-nitrophenol + NADPH + O2 + H(+) = 4-nitrocatechol + NADP(+) + H2O. Its pathway is lipid metabolism; fatty acid metabolism. Its activity is regulated as follows. The omega-1 hydroxylase activity is stimulated by cytochrome b5. A cytochrome P450 monooxygenase involved in the metabolism of fatty acids. Mechanistically, uses molecular oxygen inserting one oxygen atom into a substrate, and reducing the second into a water molecule, with two electrons provided by NADPH via cytochrome P450 reductase (NADPH--hemoprotein reductase). Catalyzes the hydroxylation of carbon-hydrogen bonds. Hydroxylates fatty acids specifically at the omega-1 position displaying the highest catalytic activity for saturated fatty acids. May be involved in the oxidative metabolism of xenobiotics. The chain is Cytochrome P450 2E1 from Homo sapiens (Human).